The primary structure comprises 336 residues: Inactive serine/threonine-protein kinase BKN2 (336 aa).

The segment at 1 to 25 is disordered; that stretch reads MGNCLKPLKEQPPSASPKPLTIPSS. A lipid anchor (N-myristoyl glycine) is attached at Gly-2. Residue Cys-4 is the site of S-palmitoyl cysteine attachment. One can recognise a Protein kinase domain in the interval 52–332; the sequence is YMVIKGNDNG…QVFDGLNDIA (281 aa).

This sequence belongs to the protein kinase superfamily. Ser/Thr protein kinase family. As to quaternary structure, component of an immune signaling complex made of, at least, SZE1, BKN2/SZE2, ZAR1 and ZED1. Interacts directly with ZAR1 and Pseudomonas syringae HOPZ1A at the plasma membrane. Post-translationally, N-terminal myristoylation is critical for plasma membrane localization and implication in defense responses. Expressed in stigma and ovaries in flowers, and in stems and seedlings.

It is found in the cell membrane. Its function is as follows. Together with SZE1 and ZED1, required for effector-triggered immunity (e.g. Pseudomonas syringae type III effector HopZ1a) via the activation of ZAR1, thus being essential for resistance against P. syringae pv. tomato DC3000 expressing HopZ1a. Collaboratively with BKN1, involved in compatible pollen-stigma interactions. The polypeptide is Inactive serine/threonine-protein kinase BKN2 (Arabidopsis thaliana (Mouse-ear cress)).